A 267-amino-acid chain; its full sequence is Indole-3-glycerol phosphate synthase (267 aa).

It belongs to the TrpC family.

It catalyses the reaction 1-(2-carboxyphenylamino)-1-deoxy-D-ribulose 5-phosphate + H(+) = (1S,2R)-1-C-(indol-3-yl)glycerol 3-phosphate + CO2 + H2O. It participates in amino-acid biosynthesis; L-tryptophan biosynthesis; L-tryptophan from chorismate: step 4/5. This chain is Indole-3-glycerol phosphate synthase, found in Cupriavidus taiwanensis (strain DSM 17343 / BCRC 17206 / CCUG 44338 / CIP 107171 / LMG 19424 / R1) (Ralstonia taiwanensis (strain LMG 19424)).